The chain runs to 113 residues: Prefoldin subunit beta (113 aa).

The protein belongs to the prefoldin subunit beta family. In terms of assembly, heterohexamer of two alpha and four beta subunits.

Its subcellular location is the cytoplasm. In terms of biological role, molecular chaperone capable of stabilizing a range of proteins. Seems to fulfill an ATP-independent, HSP70-like function in archaeal de novo protein folding. This chain is Prefoldin subunit beta, found in Methanococcus maripaludis (strain C7 / ATCC BAA-1331).